A 290-amino-acid chain; its full sequence is MSKINLEDLKSLSKETSAGLVHCKQALSEAHGDLTRAREILKELGHAVSVKKANRGARDGVVGALSSGKFGVILELNCETDFVARNEKFQQFAQSVLEAACAAKVKSVEECLSTPLPGGQKVRDAIVEQVAVFRENIVLSRCVTYEVSQSGLLGVYVHNKYTENLGKIGVAVAVVSEADPSFLSTVAKDIAIQVMSECPCAIDVARIPPNLLESEKHKYNLEVEGKPASVAEKIIAGKLSKFYKKVVLLEQPLFSDPERSVKQYISDKEMESSAKIDVVWYEVFVLGEAS.

The involved in Mg(2+) ion dislocation from EF-Tu stretch occupies residues 80–83; that stretch reads TDFV.

Belongs to the EF-Ts family.

The protein localises to the cytoplasm. Functionally, associates with the EF-Tu.GDP complex and induces the exchange of GDP to GTP. It remains bound to the aminoacyl-tRNA.EF-Tu.GTP complex up to the GTP hydrolysis stage on the ribosome. In Neorickettsia sennetsu (strain ATCC VR-367 / Miyayama) (Ehrlichia sennetsu), this protein is Elongation factor Ts.